Here is a 127-residue protein sequence, read N- to C-terminus: MNQTVKVKKKKKTITLGVVHIRASFNNTIVTFTDIQGNTISSASAGGNGFKGARKATPYAAQVTVDRASEKAKEYGLKTISIRIGGPGAQRESAMRALFGQNFVVTSILDVSSIAHNGVRPPKRRRV.

It belongs to the universal ribosomal protein uS11 family. Part of the 30S ribosomal subunit. Interacts with proteins S7 and S18. Binds to IF-3.

Its function is as follows. Located on the platform of the 30S subunit, it bridges several disparate RNA helices of the 16S rRNA. Forms part of the Shine-Dalgarno cleft in the 70S ribosome. The chain is Small ribosomal subunit protein uS11 from Rickettsia rickettsii (strain Iowa).